The sequence spans 173 residues: Crossover junction endodeoxyribonuclease RuvC (173 aa).

Catalysis depends on residues D8, E67, and D139. 3 residues coordinate Mg(2+): D8, E67, and D139.

Belongs to the RuvC family. As to quaternary structure, homodimer which binds Holliday junction (HJ) DNA. The HJ becomes 2-fold symmetrical on binding to RuvC with unstacked arms; it has a different conformation from HJ DNA in complex with RuvA. In the full resolvosome a probable DNA-RuvA(4)-RuvB(12)-RuvC(2) complex forms which resolves the HJ. It depends on Mg(2+) as a cofactor.

It localises to the cytoplasm. The catalysed reaction is Endonucleolytic cleavage at a junction such as a reciprocal single-stranded crossover between two homologous DNA duplexes (Holliday junction).. In terms of biological role, the RuvA-RuvB-RuvC complex processes Holliday junction (HJ) DNA during genetic recombination and DNA repair. Endonuclease that resolves HJ intermediates. Cleaves cruciform DNA by making single-stranded nicks across the HJ at symmetrical positions within the homologous arms, yielding a 5'-phosphate and a 3'-hydroxyl group; requires a central core of homology in the junction. The consensus cleavage sequence is 5'-(A/T)TT(C/G)-3'. Cleavage occurs on the 3'-side of the TT dinucleotide at the point of strand exchange. HJ branch migration catalyzed by RuvA-RuvB allows RuvC to scan DNA until it finds its consensus sequence, where it cleaves and resolves the cruciform DNA. This chain is Crossover junction endodeoxyribonuclease RuvC, found in Salmonella agona (strain SL483).